A 310-amino-acid polypeptide reads, in one-letter code: tRNA dimethylallyltransferase (310 aa).

14–21 (GPTASGKS) serves as a coordination point for ATP. 16–21 (TASGKS) contributes to the substrate binding site. Interaction with substrate tRNA stretches follow at residues 39–42 (DSMQ) and 163–167 (QRIVR).

It belongs to the IPP transferase family. In terms of assembly, monomer. The cofactor is Mg(2+).

The enzyme catalyses adenosine(37) in tRNA + dimethylallyl diphosphate = N(6)-dimethylallyladenosine(37) in tRNA + diphosphate. Catalyzes the transfer of a dimethylallyl group onto the adenine at position 37 in tRNAs that read codons beginning with uridine, leading to the formation of N6-(dimethylallyl)adenosine (i(6)A). The chain is tRNA dimethylallyltransferase from Brucella suis biovar 1 (strain 1330).